We begin with the raw amino-acid sequence, 337 residues long: Lipoyl synthase (337 aa).

Positions 81, 86, 92, 107, 111, 114, and 323 each coordinate [4Fe-4S] cluster. One can recognise a Radical SAM core domain in the interval 93-312; sequence FSHGTATFMI…EEYGNALGFS (220 aa).

It belongs to the radical SAM superfamily. Lipoyl synthase family. [4Fe-4S] cluster serves as cofactor.

It is found in the cytoplasm. The catalysed reaction is [[Fe-S] cluster scaffold protein carrying a second [4Fe-4S](2+) cluster] + N(6)-octanoyl-L-lysyl-[protein] + 2 oxidized [2Fe-2S]-[ferredoxin] + 2 S-adenosyl-L-methionine + 4 H(+) = [[Fe-S] cluster scaffold protein] + N(6)-[(R)-dihydrolipoyl]-L-lysyl-[protein] + 4 Fe(3+) + 2 hydrogen sulfide + 2 5'-deoxyadenosine + 2 L-methionine + 2 reduced [2Fe-2S]-[ferredoxin]. Its pathway is protein modification; protein lipoylation via endogenous pathway; protein N(6)-(lipoyl)lysine from octanoyl-[acyl-carrier-protein]: step 2/2. Its function is as follows. Catalyzes the radical-mediated insertion of two sulfur atoms into the C-6 and C-8 positions of the octanoyl moiety bound to the lipoyl domains of lipoate-dependent enzymes, thereby converting the octanoylated domains into lipoylated derivatives. The sequence is that of Lipoyl synthase from Xanthomonas oryzae pv. oryzae (strain MAFF 311018).